Here is a 371-residue protein sequence, read N- to C-terminus: MRVLHVYKTYYPDTYGGIEQVIYQLSQGCARRGIAADVFTFSPDKETGPVAYEDHRVIYNKQLFEIASTPFSLKALKRFKQIKDDYDIINYHFPFPFMDMLHLSARPDARTVVTYHSDIVKQKRLMKLYQPLQERFLASVDCIVASSPNYVASSQTLKKYQDKTVVIPFGLEQHDVQHDSQRVAHWRETVGDNFFLFVGAFRYYKGLHILLDAAERSRLPVVIVGGGPLEAEVRREAQQRGLSNVVFTGMLNDEDKYILFQLCRGVVFPSHLRSEAFGITLLEGARFARPLISCEIGTGTSFINQDKVSGCVIPPNDSQALVEAMNELWNNEETSNRYGENSRRRFEEMFTADHMIDAYVNLYTTLLESKS.

Belongs to the glycosyltransferase group 1 family. Glycosyltransferase 4 subfamily.

It carries out the reaction N-acetyl-alpha-D-glucosaminyl-di-trans,octa-cis-undecaprenyl diphosphate + GDP-alpha-D-mannose = alpha-D-mannosyl-(1-&gt;3)-N-acetyl-alpha-D-glucosaminyl-di-trans,octa-cis-undecaprenyl diphosphate + GDP + H(+). The protein operates within bacterial outer membrane biogenesis; LPS O-antigen biosynthesis. Its function is as follows. Mannosyltransferase involved in the biosynthesis of the repeat unit of the lipopolysaccharide (LPS) O-antigen region. Catalyzes the transfer of a single alpha-(1-&gt;3)-linked mannose residue to the acceptor N-acetyl-glucosaminyl-diphospho-undecaprenol during the synthesis of the adapter region. This chain is O-antigen chain mannosyltransferase C, found in Escherichia coli.